The chain runs to 351 residues: Protein arginine N-methyltransferase 1-B (351 aa).

The 302-residue stretch at 30 to 331 folds into the SAM-dependent MTase PRMT-type domain; sequence KDYYFDSYAH…KNNRDLDFTV (302 aa). Residues histidine 43, arginine 52, glycine 76, glutamate 98, and glutamate 127 each coordinate S-adenosyl-L-methionine. Active-site residues include glutamate 142 and glutamate 151.

It belongs to the class I-like SAM-binding methyltransferase superfamily. Protein arginine N-methyltransferase family. In terms of assembly, homodimer. Homooctamer; individual homodimers associates to form a homooctamer and homooligomerization is required for proper localization to the cell membrane. Individual homodimers can associate to form a homohexamer. Component of a complex with lsm14a/rap55a. Interacts with cirbp. As to expression, from the onset of gastrulation, expressed in dorsal mesoderm, and in dorsal and ventral ectoderm. At the neurula and tail bud stages, expression is restricted to the neuroectoderm, with highest expression in the anterior neural plate.

The protein localises to the nucleus. The protein resides in the nucleoplasm. It is found in the cytoplasm. Its subcellular location is the cytosol. The enzyme catalyses L-arginyl-[protein] + 2 S-adenosyl-L-methionine = N(omega),N(omega)-dimethyl-L-arginyl-[protein] + 2 S-adenosyl-L-homocysteine + 2 H(+). The catalysed reaction is L-arginyl-[protein] + S-adenosyl-L-methionine = N(omega)-methyl-L-arginyl-[protein] + S-adenosyl-L-homocysteine + H(+). It carries out the reaction N(omega)-methyl-L-arginyl-[protein] + S-adenosyl-L-methionine = N(omega),N(omega)-dimethyl-L-arginyl-[protein] + S-adenosyl-L-homocysteine + H(+). In terms of biological role, arginine methyltransferase that methylates (mono and asymmetric dimethylation) the guanidino nitrogens of arginyl residues present in target proteins. Constitutes the main enzyme that mediates monomethylation and asymmetric dimethylation of histone H4 'Arg-4' (H4R3me1 and H4R3me2a, respectively), a specific tag for epigenetic transcriptional activation. Methylates ilf3 to regulate its DNA-binding activity. Required for neural induction, playing a key role in the control of epidermal versus neural cell fate choice. In Xenopus laevis (African clawed frog), this protein is Protein arginine N-methyltransferase 1-B (prmt1-b).